Reading from the N-terminus, the 222-residue chain is uncharacterized protein (222 aa).

Positions Ala-142–Leu-222 are disordered. Low complexity predominate over residues Gln-160–Ala-169. A compositionally biased stretch (basic residues) spans Pro-182–Arg-196.

This sequence belongs to the Rv1128c/1148c/1588c/1702c/1945/3466 family.

This is an uncharacterized protein from Mycobacterium tuberculosis (strain CDC 1551 / Oshkosh).